The chain runs to 279 residues: CDP-paratose synthase (279 aa).

Tyrosine 115 functions as the Proton acceptor in the catalytic mechanism.

It belongs to the NAD(P)-dependent epimerase/dehydratase family.

It carries out the reaction CDP-alpha-D-paratose + NADP(+) = CDP-4-dehydro-3,6-dideoxy-alpha-D-glucose + NADPH + H(+). It functions in the pathway nucleotide-sugar biosynthesis; CDP-3,6-dideoxy-D-mannose biosynthesis; CDP-3,6-dideoxy-D-mannose from CTP and alpha-D-glucose 1-phosphate: step 4/5. Its function is as follows. Catalyzes synthesis of paratose and tyvelose, unusual 3,6-dideoxyhexose sugars that form part of the O-antigen in the lipopolysaccharides of several enteric bacteria. The protein is CDP-paratose synthase (rfbS) of Salmonella typhi.